Reading from the N-terminus, the 499-residue chain is Glycerol kinase (499 aa).

T13 contributes to the ADP binding site. ATP is bound by residues T13, T14, and S15. Sn-glycerol 3-phosphate is bound at residue T13. R17 contacts ADP. R83, E84, Y135, and D245 together coordinate sn-glycerol 3-phosphate. Residues R83, E84, Y135, D245, and Q246 each contribute to the glycerol site. 2 residues coordinate ADP: T267 and G310. ATP is bound by residues T267, G310, Q314, and A411. ADP-binding residues include A411 and N415.

Belongs to the FGGY kinase family.

The enzyme catalyses glycerol + ATP = sn-glycerol 3-phosphate + ADP + H(+). It participates in polyol metabolism; glycerol degradation via glycerol kinase pathway; sn-glycerol 3-phosphate from glycerol: step 1/1. Its activity is regulated as follows. Inhibited by fructose 1,6-bisphosphate (FBP). Its function is as follows. Key enzyme in the regulation of glycerol uptake and metabolism. Catalyzes the phosphorylation of glycerol to yield sn-glycerol 3-phosphate. The polypeptide is Glycerol kinase (Xylella fastidiosa (strain M12)).